The sequence spans 432 residues: Type I restriction enzyme MjaIX specificity subunit (432 aa).

The protein belongs to the type-I restriction system S methylase family. As to quaternary structure, the type I restriction/modification system is composed of three polypeptides R, M and S.

Functionally, the specificity (S) subunit of a type I restriction enzyme; this subunit dictates DNA sequence specificity. The M and S subunits together form a methyltransferase (MTase) that methylates A-3 on the top and A-2 on the bottom strand of the sequence 5'-CCAN(5)GTR-3'. In the presence of the R subunit the complex can also act as an endonuclease, binding to the same target sequence but cutting the DNA some distance from this site. Whether the DNA is cut or modified depends on the methylation state of the target sequence. When the target site is unmodified, the DNA is cut. When the target site is hemimethylated, the complex acts as a maintenance MTase modifying the DNA so that both strands become methylated. After locating a non-methylated recognition site, the enzyme complex serves as a molecular motor that translocates DNA in an ATP-dependent manner until a collision occurs that triggers cleavage. The polypeptide is Type I restriction enzyme MjaIX specificity subunit (hsdS) (Methanocaldococcus jannaschii (strain ATCC 43067 / DSM 2661 / JAL-1 / JCM 10045 / NBRC 100440) (Methanococcus jannaschii)).